Consider the following 151-residue polypeptide: Ubiquitin-conjugating enzyme E2 W (151 aa).

Residue Met1 forms a Peptide (Met-Gly) (interchain with G-Cter in ubiquitin) linkage. The 149-residue stretch at Ser3–Cys151 folds into the UBC core domain. Residue Cys91 is the Glycyl thioester intermediate of the active site.

Belongs to the ubiquitin-conjugating enzyme family. Homodimer. Interacts with FANCL. Interacts with STUB1/CHIP. In terms of processing, ubiquitinated in vitro in the presence of FANCL. Autoubiquitinated at Met-1.

It is found in the nucleus. The catalysed reaction is S-ubiquitinyl-[E1 ubiquitin-activating enzyme]-L-cysteine + [E2 ubiquitin-conjugating enzyme]-L-cysteine = [E1 ubiquitin-activating enzyme]-L-cysteine + S-ubiquitinyl-[E2 ubiquitin-conjugating enzyme]-L-cysteine.. The enzyme catalyses S-ubiquitinyl-[E1 ubiquitin-activating enzyme]-L-cysteine + [acceptor protein]-N-terminal-amino acid = [E1 ubiquitin-activating enzyme]-L-cysteine + N-terminal-ubiquitinyl-[acceptor protein].. The protein operates within protein modification; protein ubiquitination. Functionally, accepts ubiquitin from the E1 complex and catalyzes its covalent attachment to other proteins. Specifically monoubiquitinates the N-terminus of various substrates, including ATXN3, MAPT/TAU, POLR2H/RPB8 and STUB1/CHIP, by recognizing backbone atoms of disordered N-termini. Involved in degradation of misfolded chaperone substrates by mediating monoubiquitination of STUB1/CHIP, leading to recruitment of ATXN3 to monoubiquitinated STUB1/CHIP, and restriction of the length of ubiquitin chain attached to STUB1/CHIP substrates by ATXN3. After UV irradiation, but not after mitomycin-C (MMC) treatment, acts as a specific E2 ubiquitin-conjugating enzyme for the Fanconi anemia complex by associating with E3 ubiquitin-protein ligase FANCL and catalyzing monoubiquitination of FANCD2, a key step in the DNA damage pathway. In vitro catalyzes 'Lys-11'-linked polyubiquitination. UBE2W-catalyzed ubiquitination also occurs in the presence of inactive RING/U-box type E3s, i.e. lacking the active site cysteine residues to form thioester bonds with ubiquitin, or even in the absence of E3, albeit at a slower rate. The sequence is that of Ubiquitin-conjugating enzyme E2 W (UBE2W) from Bos taurus (Bovine).